The following is a 307-amino-acid chain: Replicase polyprotein 1ab (307 aa).

The interval 1–76 (FNKFGKARLY…HQKCLKSIAA (76 aa)) is rdRp Fingers N-ter. In terms of domain architecture, Nsp12 RNA-dependent RNA polymerase spans 1-307 (FNKFGKARLY…TDIEKGPHEF (307 aa)). The tract at residues 77 to 115 (TRGVPVVIGTTKFYGGWDDMLRRLIKDVDSPVLMGWDYP) is rdRp Palm N-ter. A RdRp catalytic domain is found at 107-269 (PVLMGWDYPK…CYNSEFASKG (163 aa)). Positions 116–174 (KCDRAMPNILRIVSSLVLARKHDSCCSHTDRFYRLANECAQVLSEIVMCGGCYYVKPGG) are rdRp Fingers C-ter. The interval 175-307 (TSSGDATTAF…TDIEKGPHEF (133 aa)) is rdRp Palm C-ter. Residues Ser-254, Asp-255, and Asp-256 contribute to the active site. Phe-307 is a region of interest (rdRp Thumb).

The protein belongs to the coronaviruses polyprotein 1ab family.

The catalysed reaction is RNA(n) + a ribonucleoside 5'-triphosphate = RNA(n+1) + diphosphate. In terms of biological role, the replicase polyprotein of coronaviruses is a multifunctional protein: it contains the activities necessary for the transcription of negative stranded RNA, leader RNA, subgenomic mRNAs and progeny virion RNA as well as proteinases responsible for the cleavage of the polyprotein into functional products. Its function is as follows. Non-structural protein 1: binds to the 40S ribosomal subunit and inhibits host translation. The nsp1-40S ribosome complex further induces an endonucleolytic cleavage near the 5'UTR of host mRNAs, targeting them for degradation. By suppressing host gene expression, nsp1 facilitates efficient viral gene expression in infected cells and evasion from host immune response. This chain is Replicase polyprotein 1ab (rep), found in Rattus norvegicus (Rat).